A 482-amino-acid polypeptide reads, in one-letter code: Aspartic proteinase 36 (482 aa).

The first 27 residues, 1 to 27, serve as a signal peptide directing secretion; the sequence is MVTTMDPSRISRIVAVVFVLVIQVVSG. N-linked (GlcNAc...) asparagine glycosylation occurs at Asn32. Positions 78-429 constitute a Peptidase A1 domain; that stretch reads YFTKIKLGSP…DLENEVIGWA (352 aa). Asp96 is a catalytic residue. 3 N-linked (GlcNAc...) asparagine glycosylation sites follow: Asn178, Asn204, and Asn226. Residue Asp310 is part of the active site. Cys347 and Cys388 are disulfide-bonded. N-linked (GlcNAc...) asparagine glycosylation is present at Asn432. A lipid anchor (GPI-anchor amidated serine) is attached at Ser456. Positions 457–482 are cleaved as a propeptide — removed in mature form; the sequence is AASSVMNGTLVTLLSILIWVFHSFTS. Asn463 carries N-linked (GlcNAc...) asparagine glycosylation.

This sequence belongs to the peptidase A1 family. As to expression, highly expressed in pollen and pollen tubes. Mostly expressed in roots, flowers and inflorescence, and at lower levels in stems, seedlings and siliques.

Its subcellular location is the cell membrane. The protein localises to the cytoplasm. The protein resides in the cytosol. Its function is as follows. Displays aspartic proteolytic activity. Together with A39, contributes to pollen and ovule development, including the apical cell wall constitution of the growing pollen tubes. This chain is Aspartic proteinase 36, found in Arabidopsis thaliana (Mouse-ear cress).